Consider the following 81-residue polypeptide: Sulfur carrier protein TusA (81 aa).

Cys-19 functions as the Cysteine persulfide intermediate in the catalytic mechanism.

Belongs to the sulfur carrier protein TusA family. In terms of assembly, interacts with IscS.

Its subcellular location is the cytoplasm. It participates in tRNA modification. Functionally, sulfur carrier protein involved in sulfur trafficking in the cell. Part of a sulfur-relay system required for 2-thiolation during synthesis of 2-thiouridine of the modified wobble base 5-methylaminomethyl-2-thiouridine (mnm(5)s(2)U) in tRNA. Interacts with IscS and stimulates its cysteine desulfurase activity. Accepts an activated sulfur from IscS, which is then transferred to TusD, and thus determines the direction of sulfur flow from IscS to 2-thiouridine formation. Also appears to be involved in sulfur transfer for the biosynthesis of molybdopterin. The sequence is that of Sulfur carrier protein TusA from Klebsiella pneumoniae subsp. pneumoniae (strain ATCC 700721 / MGH 78578).